Here is a 358-residue protein sequence, read N- to C-terminus: uncharacterized protein (358 aa).

Zn(2+) contacts are provided by Cys39, His61, Cys92, Cys95, Cys98, Cys106, and Asp157.

It belongs to the zinc-containing alcohol dehydrogenase family. Zn(2+) serves as cofactor.

This is an uncharacterized protein from Escherichia coli (strain K12).